A 517-amino-acid polypeptide reads, in one-letter code: L-amino-acid oxidase (517 aa).

The first 18 residues, 1-18, serve as a signal peptide directing secretion; the sequence is MNVFFMFSLLFLAALESC. The cysteines at positions 29 and 192 are disulfide-linked. Residues 62 to 63, 82 to 83, Arg90, and 106 to 109 contribute to the FAD site; these read MA, EA, and GPMR. Arg109 contacts substrate. Residue Asn191 is glycosylated (N-linked (GlcNAc...) asparagine). Residue Val280 participates in FAD binding. Cys350 and Cys431 are oxidised to a cystine. Asn380 is a glycosylation site (N-linked (GlcNAc...) asparagine). Tyr391 lines the substrate pocket. Residues Glu476 and 483-488 each bind FAD; that span reads GWLDST. 483 to 484 serves as a coordination point for substrate; the sequence is GW.

The protein belongs to the flavin monoamine oxidase family. FIG1 subfamily. Homodimer; non-covalently linked. It depends on FAD as a cofactor. Post-translationally, N-glycosylated. In terms of tissue distribution, expressed by the venom gland.

The protein resides in the secreted. The enzyme catalyses an L-alpha-amino acid + O2 + H2O = a 2-oxocarboxylate + H2O2 + NH4(+). In terms of biological role, catalyzes an oxidative deamination of predominantly hydrophobic and aromatic L-amino acids, thus producing hydrogen peroxide that may contribute to the diverse toxic effects of this enzyme. Exhibits diverse biological activities, such as hemorrhage, hemolysis, edema, apoptosis of vascular endothelial cells or tumor cell lines, antibacterial and antiparasitic activities, as well as regulation of platelet aggregation. Effects of snake L-amino oxidases on platelets are controversial, since they either induce aggregation or inhibit agonist-induced aggregation. These different effects are probably due to different experimental conditions. This is L-amino-acid oxidase from Notechis scutatus scutatus (Mainland tiger snake).